The primary structure comprises 222 residues: MAGKPVLHYFNARGRMECIRWLLAAAGVEFEEKFIQSPEDLEKLKKDGNLMFDQVPMVEIDGMKLVQTRAILNYIATKYDLYGKDMKERALIDMYTEGILDLTEMIGQLVLCPPDQREAKTALAKDRTKNRYLPAFEKVLKSHGQDYLVGNRLTRVDVHLLELLLYVEELDASLLTPFPLLKAFKSRISSLPNVKKFLHPGSQRKPPLDAKQIEEARKVFKF.

Position 2 is an N-acetylalanine (Ala2). The 81-residue stretch at 3-83 (GKPVLHYFNA…YIATKYDLYG (81 aa)) folds into the GST N-terminal domain. Lys4 is modified (N6-succinyllysine). Residues Tyr9, Lys45, 54-55 (QV), and 67-68 (QT) contribute to the glutathione site. The region spanning 85–208 (DMKERALIDM…HPGSQRKPPL (124 aa)) is the GST C-terminal domain.

This sequence belongs to the GST superfamily. Alpha family. As to quaternary structure, homodimer. Heterodimer of GSTA1 and GSTA2. As to expression, expressed in the kidney.

The enzyme catalyses RX + glutathione = an S-substituted glutathione + a halide anion + H(+). Functionally, catalyzes the conjugation of glutathione to a large variety of electrophilic compounds. The chain is Glutathione S-transferase A2 (Gsta2) from Mus musculus (Mouse).